The following is an 85-amino-acid chain: Large ribosomal subunit protein bL27 (85 aa).

Positions 1-22 (MAHKKGASSTRNGRDSNAQRLG) are disordered. Polar residues predominate over residues 7–19 (ASSTRNGRDSNAQ).

It belongs to the bacterial ribosomal protein bL27 family.

This chain is Large ribosomal subunit protein bL27 (rpmA), found in Streptomyces griseus.